The sequence spans 303 residues: Ribosomal RNA small subunit methyltransferase A (303 aa).

Asparagine 37, valine 39, glycine 64, glutamate 85, aspartate 115, and asparagine 138 together coordinate S-adenosyl-L-methionine.

Belongs to the class I-like SAM-binding methyltransferase superfamily. rRNA adenine N(6)-methyltransferase family. RsmA subfamily.

It is found in the cytoplasm. The catalysed reaction is adenosine(1518)/adenosine(1519) in 16S rRNA + 4 S-adenosyl-L-methionine = N(6)-dimethyladenosine(1518)/N(6)-dimethyladenosine(1519) in 16S rRNA + 4 S-adenosyl-L-homocysteine + 4 H(+). Functionally, specifically dimethylates two adjacent adenosines (A1518 and A1519) in the loop of a conserved hairpin near the 3'-end of 16S rRNA in the 30S particle. May play a critical role in biogenesis of 30S subunits. The chain is Ribosomal RNA small subunit methyltransferase A from Bifidobacterium adolescentis (strain ATCC 15703 / DSM 20083 / NCTC 11814 / E194a).